The following is a 359-amino-acid chain: Large ribosomal subunit protein uL3 (359 aa).

Residues Val-336–Gln-359 form a disordered region.

It belongs to the universal ribosomal protein uL3 family. In terms of assembly, part of the 50S ribosomal subunit. Forms a cluster with proteins L14 and L24e.

Its function is as follows. One of the primary rRNA binding proteins, it binds directly near the 3'-end of the 23S rRNA, where it nucleates assembly of the 50S subunit. This chain is Large ribosomal subunit protein uL3, found in Thermococcus sibiricus (strain DSM 12597 / MM 739).